The following is a 552-amino-acid chain: MPAPQPLLPLLFAFVLIHLTSETNLLPEPGSHPGMCPNQLSPHLWVDAQSTCERECTRDQDCAASEKCCTNVCGLQSCVAARFPSGGPATPETAASCEDFQCPQQGSNCDIWDGQPVCRCRDRCEKEPSFTCASDGLTYYNRCYMDAEACLRGLHLHVVPCKHILSWPPSSPGPPETTARPTPGAAPMPPALYNSPSPQAVHVGGTASLHCDVSGRPPPAVTWEKQSHQRENLIMRPDQMYGNVVVTSIGQLVLYNAQLEDAGLYTCTARNAAGLLRADFPLSVLQRATTQDRDPGVLALAECQPDTQACVGPPTPHHVLWRFDPQRGSCMTFPALKCDGAARGFETYEACQQACVRGPGDVCALPPVQGPCQGWEPRWAYSPLLQQCHPFIYSGCEGNSNNFESRESCEDACPVPRTPPCRACRLKSKLALSLCRSDFAIVGRLTEVLEEPEAAGGIARVALDDVLKDDKMGLKFLGTKYLEVTLSGMDWACPCPNVTVGDGPLVIMGEVREGVAVLDANSYVRAASEKRVKKIVELLEKKACELLNRFQD.

The first 25 residues, 1–25 (MPAPQPLLPLLFAFVLIHLTSETNL), serve as a signal peptide directing secretion. The region spanning 29 to 82 (PGSHPGMCPNQLSPHLWVDAQSTCERECTRDQDCAASEKCCTNVCGLQSCVAAR) is the WAP domain. 17 disulfides stabilise this stretch: cysteine 36–cysteine 69, cysteine 52–cysteine 73, cysteine 56–cysteine 68, cysteine 62–cysteine 78, cysteine 120–cysteine 150, cysteine 124–cysteine 143, cysteine 132–cysteine 161, cysteine 211–cysteine 267, cysteine 303–cysteine 355, cysteine 310–cysteine 338, cysteine 330–cysteine 351, cysteine 363–cysteine 413, cysteine 372–cysteine 396, cysteine 388–cysteine 409, cysteine 421–cysteine 493, cysteine 424–cysteine 495, and cysteine 435–cysteine 544. The 52-residue stretch at 112–163 (WDGQPVCRCRDRCEKEPSFTCASDGLTYYNRCYMDAEACLRGLHLHVVPCKH) folds into the Kazal-like domain. Residues 190–283 (PALYNSPSPQ…GLLRADFPLS (94 aa)) form the Ig-like C2-type domain. BPTI/Kunitz inhibitor domains are found at residues 289–355 (TTQD…QQAC) and 363–413 (CALP…EDAC). Positions 413-544 (CPVPRTPPCR…IVELLEKKAC (132 aa)) constitute an NTR domain. The N-linked (GlcNAc...) asparagine glycan is linked to asparagine 497.

This sequence belongs to the WFIKKN family. In terms of tissue distribution, preferentially expressed in the developing inner ear and the dorsal neural tube.

The protein localises to the secreted. Its function is as follows. Protease-inhibitor that contains multiple distinct protease inhibitor domains. Probably has serine protease- and metalloprotease-inhibitor activity. In Rattus norvegicus (Rat), this protein is WAP, Kazal, immunoglobulin, Kunitz and NTR domain-containing protein 1 (Wfikkn1).